A 431-amino-acid polypeptide reads, in one-letter code: Glutamyl-tRNA reductase (431 aa).

Substrate-binding positions include 49–52 (TCDR), Ser-109, 114–116 (EPH), and Gln-120. Cys-50 functions as the Nucleophile in the catalytic mechanism. 189–194 (GTQEMG) provides a ligand contact to NADP(+).

This sequence belongs to the glutamyl-tRNA reductase family. In terms of assembly, homodimer.

It carries out the reaction (S)-4-amino-5-oxopentanoate + tRNA(Glu) + NADP(+) = L-glutamyl-tRNA(Glu) + NADPH + H(+). The protein operates within porphyrin-containing compound metabolism; protoporphyrin-IX biosynthesis; 5-aminolevulinate from L-glutamyl-tRNA(Glu): step 1/2. It functions in the pathway porphyrin-containing compound metabolism; chlorophyll biosynthesis. Its function is as follows. Catalyzes the NADPH-dependent reduction of glutamyl-tRNA(Glu) to glutamate 1-semialdehyde (GSA). This is Glutamyl-tRNA reductase from Rhodospirillum rubrum (strain ATCC 11170 / ATH 1.1.1 / DSM 467 / LMG 4362 / NCIMB 8255 / S1).